The sequence spans 373 residues: L-threonine 3-dehydrogenase, mitochondrial (373 aa).

NAD(+)-binding positions include 62–67, 88–90, 106–107, Tyr195, Lys199, and Ile225; these read GGLGQL, DIR, and NI. The Proton donor/acceptor role is filled by Tyr195.

The protein belongs to the NAD(P)-dependent epimerase/dehydratase family. In terms of assembly, homodimer.

It localises to the mitochondrion. The enzyme catalyses L-threonine + NAD(+) = (2S)-2-amino-3-oxobutanoate + NADH + H(+). It participates in amino-acid degradation; L-threonine degradation via oxydo-reductase pathway; glycine from L-threonine: step 1/2. Catalyzes the NAD(+)-dependent oxidation of L-threonine to 2-amino-3-ketobutyrate, mediating L-threonine catabolism. The sequence is that of L-threonine 3-dehydrogenase, mitochondrial from Mus musculus (Mouse).